The following is a 150-amino-acid chain: UPF0178 protein ASA_3749 (150 aa).

The protein belongs to the UPF0178 family.

This chain is UPF0178 protein ASA_3749, found in Aeromonas salmonicida (strain A449).